The chain runs to 279 residues: MQFWKVHGARNDFVLVDETEEEVVPESDKPDFARWACDRRSGVGADGVVFIRSDPPSVEMRIFNRDGSEAEFCGNAARCVVKYVTEVRGENVKILRTLSGAHRVEVQGGWIAVEVPEAEIKKVVELGYEVDAGVPHFVRLTERDPIHDFGGLTDEAKTIFSEYEPKGGVNVTYAAPSVDELRVRTFERGVGWTPACGSGVVAASLVYSEIFGPFEEVSVRTAGGCLRVSLSDGPLLIGRAEIVYKGELRGDWRENTDHQRRRHSLSRSPSGRPRLQECR.

Substrate is bound by residues asparagine 11 and asparagine 64. The active-site Proton donor is cysteine 73. Residues 74–75, asparagine 170, and 187–188 contribute to the substrate site; these read GN and ER. Cysteine 196 functions as the Proton acceptor in the catalytic mechanism. 197 to 198 is a binding site for substrate; that stretch reads GS. Positions 255–279 are disordered; it reads NTDHQRRRHSLSRSPSGRPRLQECR.

Belongs to the diaminopimelate epimerase family. In terms of assembly, homodimer.

Its subcellular location is the cytoplasm. It carries out the reaction (2S,6S)-2,6-diaminopimelate = meso-2,6-diaminopimelate. It participates in amino-acid biosynthesis; L-lysine biosynthesis via DAP pathway; DL-2,6-diaminopimelate from LL-2,6-diaminopimelate: step 1/1. Its function is as follows. Catalyzes the stereoinversion of LL-2,6-diaminopimelate (L,L-DAP) to meso-diaminopimelate (meso-DAP), a precursor of L-lysine. This Methanopyrus kandleri (strain AV19 / DSM 6324 / JCM 9639 / NBRC 100938) protein is Diaminopimelate epimerase.